The sequence spans 300 residues: Tyrosine recombinase XerC (300 aa).

In terms of domain architecture, Core-binding (CB) spans 2-88 (ENVNFTLNLF…SLRSFYKFLL (87 aa)). Residues 109–294 (KIPHFLYPDE…TKDHLRYVYL (186 aa)) enclose the Tyr recombinase domain. Catalysis depends on residues Arg149, Lys173, His246, Arg249, and His272. Tyr281 acts as the O-(3'-phospho-DNA)-tyrosine intermediate in catalysis.

The protein belongs to the 'phage' integrase family. XerC subfamily. Forms a cyclic heterotetrameric complex composed of two molecules of XerC and two molecules of XerD.

The protein localises to the cytoplasm. Site-specific tyrosine recombinase, which acts by catalyzing the cutting and rejoining of the recombining DNA molecules. The XerC-XerD complex is essential to convert dimers of the bacterial chromosome into monomers to permit their segregation at cell division. It also contributes to the segregational stability of plasmids. This is Tyrosine recombinase XerC from Anoxybacillus flavithermus (strain DSM 21510 / WK1).